Consider the following 73-residue polypeptide: Translation initiation factor IF-1 (73 aa).

The S1-like domain occupies 1–73; it reads MAKKDGVIEI…TRGRIVYRYK (73 aa).

Belongs to the IF-1 family. In terms of assembly, component of the 30S ribosomal translation pre-initiation complex which assembles on the 30S ribosome in the order IF-2 and IF-3, IF-1 and N-formylmethionyl-tRNA(fMet); mRNA recruitment can occur at any time during PIC assembly.

The protein localises to the cytoplasm. Functionally, one of the essential components for the initiation of protein synthesis. Stabilizes the binding of IF-2 and IF-3 on the 30S subunit to which N-formylmethionyl-tRNA(fMet) subsequently binds. Helps modulate mRNA selection, yielding the 30S pre-initiation complex (PIC). Upon addition of the 50S ribosomal subunit IF-1, IF-2 and IF-3 are released leaving the mature 70S translation initiation complex. In Paenarthrobacter aurescens (strain TC1), this protein is Translation initiation factor IF-1.